Reading from the N-terminus, the 301-residue chain is Phosducin-like protein (301 aa).

Thr2 is modified (N-acetylthreonine). The interval 15-60 (YYYSTSEDEDSDHEDKDRGRGAPASSSTPAEAELAGEGISVNTGPK) is disordered. A phosphoserine mark is found at Ser20 and Ser25. A compositionally biased stretch (low complexity) spans 36–49 (APASSSTPAEAELA). In terms of domain architecture, Phosducin spans 36–299 (APASSSTPAE…TCHSEDSDLE (264 aa)). A thioredoxin fold region spans residues 158–301 (FKQVLEIPSG…HSEDSDLEID (144 aa)). Phosphoserine is present on residues Ser226, Ser293, and Ser296.

The protein belongs to the phosducin family. Interacts with the CCT chaperonin complex. Forms a complex with the beta and gamma subunits of the GTP-binding protein, transducin.

The protein resides in the cell projection. It localises to the cilium. Functions as a co-chaperone for CCT in the assembly of heterotrimeric G protein complexes, facilitates the assembly of both Gbeta-Ggamma and RGS-Gbeta5 heterodimers. Also acts as a positive regulator of hedgehog signaling and regulates ciliary function. The protein is Phosducin-like protein (Pdcl) of Rattus norvegicus (Rat).